The sequence spans 452 residues: Prephenate dehydrogenase [NADP(+)] (452 aa).

14–43 contributes to the NADP(+) binding site; that stretch reads KVIGIIGLGDMGLLYANKFTDAGWGVICCD. A Prephenate/arogenate dehydrogenase domain is found at 14–297; sequence KVIGIIGLGD…GKHTGLLLLD (284 aa).

Belongs to the prephenate/arogenate dehydrogenase family.

The catalysed reaction is prephenate + NADP(+) = 3-(4-hydroxyphenyl)pyruvate + CO2 + NADPH. It participates in amino-acid biosynthesis; L-tyrosine biosynthesis; (4-hydroxyphenyl)pyruvate from prephenate (NADP(+) route): step 1/1. The chain is Prephenate dehydrogenase [NADP(+)] (TYR1) from Saccharomyces cerevisiae (strain ATCC 204508 / S288c) (Baker's yeast).